Reading from the N-terminus, the 273-residue chain is Rhamnulose-1-phosphate aldolase (273 aa).

The active site involves Glu117. His140, His142, and His211 together coordinate Zn(2+).

This sequence belongs to the aldolase class II family. RhaD subfamily. It depends on Zn(2+) as a cofactor.

It localises to the cytoplasm. It catalyses the reaction L-rhamnulose 1-phosphate = (S)-lactaldehyde + dihydroxyacetone phosphate. It functions in the pathway carbohydrate degradation; L-rhamnose degradation; glycerone phosphate from L-rhamnose: step 3/3. Catalyzes the reversible cleavage of L-rhamnulose-1-phosphate to dihydroxyacetone phosphate (DHAP) and L-lactaldehyde. This is Rhamnulose-1-phosphate aldolase from Listeria monocytogenes serotype 4b (strain CLIP80459).